We begin with the raw amino-acid sequence, 473 residues long: Serine palmitoyltransferase 1 (473 aa).

The Lumenal segment spans residues 1–15; that stretch reads MAMAAEQWVLVEMVQ. Residues 1–66 form an interaction with SPTLC2 region; the sequence is MAMAAEQWVL…KEELIEEWQP (66 aa). The helical transmembrane segment at 16-36 threads the bilayer; it reads ALYEAPAYHLILEGILILWII. At 37–473 the chain is on the cytoplasmic side; that stretch reads RLVFSKTYKL…IREAAQAVLL (437 aa). Y164 is subject to Phosphotyrosine; by ABL.

This sequence belongs to the class-II pyridoxal-phosphate-dependent aminotransferase family. Component of the serine palmitoyltransferase (SPT) complex, which is also composed of SPTLC2 or SPTLC3 and SPTSSA or SPTSSB. The heterodimer with SPTLC2 or SPTLC3 forms the catalytic core of the enzyme, while SPTSSA or SPTSSB subunits determine substrate specificity. SPT also interacts with ORMDL proteins, especially ORMDL3, which negatively regulate SPT activity in the presence of ceramides. Forms dimers of heterodimers with SPTLC2. Interacts with RTN4. It depends on pyridoxal 5'-phosphate as a cofactor. Post-translationally, phosphorylation at Tyr-164 inhibits activity and promotes cell survival.

Its subcellular location is the endoplasmic reticulum membrane. It catalyses the reaction L-serine + hexadecanoyl-CoA + H(+) = 3-oxosphinganine + CO2 + CoA. It carries out the reaction octadecanoyl-CoA + L-serine + H(+) = 3-oxoeicosasphinganine + CO2 + CoA. The enzyme catalyses tetradecanoyl-CoA + L-serine + H(+) = 3-oxohexadecasphinganine + CO2 + CoA. The catalysed reaction is dodecanoyl-CoA + L-serine + H(+) = 3-oxotetradecasphinganine + CO2 + CoA. The protein operates within lipid metabolism; sphingolipid metabolism. With respect to regulation, SPT complex catalytic activity is negatively regulated by ORMDL proteins, including ORMDL3, in the presence of ceramides. This mechanism allows to maintain ceramide levels at sufficient concentrations for the production of complex sphingolipids, but which prevents the accumulation of ceramides to levels that trigger apoptosis. Functionally, component of the serine palmitoyltransferase multisubunit enzyme (SPT) that catalyzes the initial and rate-limiting step in sphingolipid biosynthesis by condensing L-serine and activated acyl-CoA (most commonly palmitoyl-CoA) to form long-chain bases. The SPT complex is also composed of SPTLC2 or SPTLC3 and SPTSSA or SPTSSB. Within this complex, the heterodimer with SPTLC2 or SPTLC3 forms the catalytic core. The composition of the serine palmitoyltransferase (SPT) complex determines the substrate preference. The SPTLC1-SPTLC2-SPTSSA complex shows a strong preference for C16-CoA substrate, while the SPTLC1-SPTLC3-SPTSSA isozyme uses both C14-CoA and C16-CoA as substrates, with a slight preference for C14-CoA. The SPTLC1-SPTLC2-SPTSSB complex shows a strong preference for C18-CoA substrate, while the SPTLC1-SPTLC3-SPTSSB isozyme displays an ability to use a broader range of acyl-CoAs, without apparent preference. Required for adipocyte cell viability and metabolic homeostasis. This is Serine palmitoyltransferase 1 (SPTLC1) from Cricetulus griseus (Chinese hamster).